Here is a 380-residue protein sequence, read N- to C-terminus: Chaperone protein DnaJ (380 aa).

The J domain occupies 5–70 (DYYEILGVAK…QKRAAYDQYG (66 aa)). A CR-type zinc finger spans residues 135-213 (GVSKEIRIPT…CHGHGRVEKS (79 aa)). Positions 148, 151, 165, 168, 187, 190, 201, and 204 each coordinate Zn(2+). CXXCXGXG motif repeat units follow at residues 148-155 (CGVCHGSG), 165-172 (CSTCHGAG), 187-194 (CPTCHGRG), and 201-208 (CNACHGHG).

It belongs to the DnaJ family. As to quaternary structure, homodimer. Zn(2+) is required as a cofactor.

It localises to the cytoplasm. Its function is as follows. Participates actively in the response to hyperosmotic and heat shock by preventing the aggregation of stress-denatured proteins and by disaggregating proteins, also in an autonomous, DnaK-independent fashion. Unfolded proteins bind initially to DnaJ; upon interaction with the DnaJ-bound protein, DnaK hydrolyzes its bound ATP, resulting in the formation of a stable complex. GrpE releases ADP from DnaK; ATP binding to DnaK triggers the release of the substrate protein, thus completing the reaction cycle. Several rounds of ATP-dependent interactions between DnaJ, DnaK and GrpE are required for fully efficient folding. Also involved, together with DnaK and GrpE, in the DNA replication of plasmids through activation of initiation proteins. The chain is Chaperone protein DnaJ from Erwinia tasmaniensis (strain DSM 17950 / CFBP 7177 / CIP 109463 / NCPPB 4357 / Et1/99).